We begin with the raw amino-acid sequence, 355 residues long: Protein pelota homolog (355 aa).

The protein belongs to the eukaryotic release factor 1 family. Pelota subfamily. As to quaternary structure, monomer. The cofactor is a divalent metal cation.

Its subcellular location is the cytoplasm. May function in recognizing stalled ribosomes, interact with stem-loop structures in stalled mRNA molecules, and effect endonucleolytic cleavage of the mRNA. May play a role in the release non-functional ribosomes and degradation of damaged mRNAs. Has endoribonuclease activity. This Haloarcula marismortui (strain ATCC 43049 / DSM 3752 / JCM 8966 / VKM B-1809) (Halobacterium marismortui) protein is Protein pelota homolog.